A 203-amino-acid polypeptide reads, in one-letter code: Glycerol-3-phosphate acyltransferase (203 aa).

6 helical membrane-spanning segments follow: residues 3 to 23, 51 to 71, 74 to 94, 116 to 136, 140 to 160, and 164 to 178; these read ILLATVAAYLIGSVSFAVVVS, KAAILTLVGDAFKGWLAVWLV, FGIGGEIGVALAAIAVFLGHL, AVHPVLGLATALTWLIVAFFF, SLAALVAAVFAPIFDVFLFGT, and PVAWAVLAMSVLLIW.

It belongs to the PlsY family. Probably interacts with PlsX.

The protein resides in the cell inner membrane. The catalysed reaction is an acyl phosphate + sn-glycerol 3-phosphate = a 1-acyl-sn-glycero-3-phosphate + phosphate. It functions in the pathway lipid metabolism; phospholipid metabolism. Functionally, catalyzes the transfer of an acyl group from acyl-phosphate (acyl-PO(4)) to glycerol-3-phosphate (G3P) to form lysophosphatidic acid (LPA). This enzyme utilizes acyl-phosphate as fatty acyl donor, but not acyl-CoA or acyl-ACP. This is Glycerol-3-phosphate acyltransferase from Burkholderia pseudomallei (strain 1710b).